The primary structure comprises 519 residues: Flavonoid 8-hydroxylase 2, chloroplastic (519 aa).

A chloroplast-targeting transit peptide spans 1–46 (MEVLQASSLSFQLLRRHSRNNLINKFRNPSLPRIHMPRQNIDLKTF). Residues 77–188 (WYPVASVCDL…SCVRNGIVWF (112 aa)) form the Rieske domain. [2Fe-2S] cluster-binding residues include Cys119, His121, Cys139, and His142. Fe cation-binding residues include His241 and His246. The Redox-active motif motif lies at 447 to 450 (CSSC). 2 consecutive transmembrane segments (helical) span residues 462–478 (IGLQ…AAAV) and 485–501 (YSMV…SKWL).

[2Fe-2S] cluster serves as cofactor. Glandular trichome-specific expression in leaves.

The protein localises to the plastid. Its subcellular location is the chloroplast membrane. It is found in the cytoplasm. The enzyme catalyses salvigenin + 2 reduced [2Fe-2S]-[ferredoxin] + O2 + 2 H(+) = 8-hydroxysalvigenin + 2 oxidized [2Fe-2S]-[ferredoxin] + H2O. Its pathway is flavonoid metabolism. Functionally, rieske-type, PAO-family oxygenase involved in the biosynthesis of polymethoxylated flavonoids natural products such as nevadensin and salvigenin, aroma compounds which contribute to the flavor of sweet basil, and exhibit pharmacological activities such as anti-allergic, anti-oxidant, antibacterial, anti-proliferative, and anti-inflammatory effects. Catalyzes the hydroxylation of salvigenin to produce 8-hydroxysalvigenin (8-OH-SALV). This is Flavonoid 8-hydroxylase 2, chloroplastic from Ocimum basilicum (Sweet basil).